A 235-amino-acid chain; its full sequence is Thiamine import ATP-binding protein ThiQ (235 aa).

The region spanning 2–230 is the ABC transporter domain; sequence LKLIDITWLY…QASASALLGI (229 aa). Residue 32 to 39 coordinates ATP; that stretch reads GPSGAGKS.

Belongs to the ABC transporter superfamily. Thiamine importer (TC 3.A.1.19.1) family. The complex is composed of two ATP-binding proteins (ThiQ), two transmembrane proteins (ThiP) and a solute-binding protein (ThiB).

The protein localises to the cell inner membrane. It carries out the reaction thiamine(out) + ATP + H2O = thiamine(in) + ADP + phosphate + H(+). Part of the ABC transporter complex ThiBPQ involved in thiamine import. Responsible for energy coupling to the transport system. Is also involved in thiamine pyrophosphate (TPP) transport. In Salmonella typhimurium (strain LT2 / SGSC1412 / ATCC 700720), this protein is Thiamine import ATP-binding protein ThiQ.